The chain runs to 128 residues: uncharacterized protein (128 aa).

A run of 2 helical transmembrane segments spans residues Leu33–Val53 and Phe61–Tyr81. The segment covering Asp99–Phe120 has biased composition (polar residues). Positions Asp99 to Asp128 are disordered.

The protein localises to the membrane. This is an uncharacterized protein from Schizosaccharomyces pombe (strain 972 / ATCC 24843) (Fission yeast).